The chain runs to 372 residues: Ubl carboxyl-terminal hydrolase 18 (372 aa).

A disordered region spans residues 19-45 (SSQSPADLEEKKEEDSNMKREQPRERP). Over residues 26–45 (LEEKKEEDSNMKREQPRERP) the composition is skewed to basic and acidic residues. A mediates interaction with IFNAR2 region spans residues 36–51 (MKREQPRERPRAWDYP). The segment at 51 to 112 (PHGLVGLHNI…MLLLLEKMQD (62 aa)) is mediates interaction with STAT2. The USP domain occupies 55 to 370 (VGLHNIGQTC…TAYLLVYMKM (316 aa)). The Nucleophile role is filled by Cys64. The interval 303 to 312 (ELFAVIAHVG) is mediates interaction with STAT2 and necessary for the negative regulation of the type I IFN signaling pathway. The segment at 313–372 (MADSGHYCVYIRNAVDGKWFCFNDSNICLVSWEDIQCTYGNPNYHWQETAYLLVYMKMEC) is mediates interaction with IFNAR2. Residue His318 is the Proton acceptor of the active site.

This sequence belongs to the peptidase C19 family. Interacts with STAT2; the interaction is direct. Interacts with IFNAR2; indirectly via STAT2, it negatively regulates the assembly of the ternary interferon-IFNAR1-IFNAR2 complex and inhibits type I interferon signaling. Interacts with STING1. Interacts with USP20.

Its subcellular location is the cytoplasm. It localises to the nucleus. The enzyme catalyses Thiol-dependent hydrolysis of ester, thioester, amide, peptide and isopeptide bonds formed by the C-terminal Gly of ubiquitin (a 76-residue protein attached to proteins as an intracellular targeting signal).. In terms of biological role, interferon-induced ISG15-specific protease that plays a crucial role for maintaining a proper balance of ISG15-conjugated proteins in cells. Regulates protein ISGylation by efficiently cleaving ISG15 conjugates linked via isopeptide bonds. Regulates T-cell activation and T-helper 17 (Th17) cell differentiation by deubiquitinating TAK1, likely to keep TAK1-TAB complexes in steady conditions. In turn, restricts activation of NF-kappa-B, NFAT, and JNK as well as expression of IL2 in T-cells after TCR activation. Acts as a molecular adapter with USP20 to promote innate antiviral response through deubiquitinating STING1. Involved also in the negative regulation of the inflammatory response triggered by type I interferon. Upon recruitment by STAT2 to the type I interferon receptor subunit IFNAR2 interferes with the assembly of the ternary interferon-IFNAR1-IFNAR2 complex and acts as a negative regulator of the type I interferon signaling pathway. Has enzymatic activity similar to isoform 1 and interferes with type I interferon signaling. Major deISGylation enzyme for nuclear proteins. This chain is Ubl carboxyl-terminal hydrolase 18 (USP18), found in Homo sapiens (Human).